Here is a 196-residue protein sequence, read N- to C-terminus: Protein kinase OspG (196 aa).

Belongs to the protein kinase superfamily. In terms of processing, autophosphorylated.

The protein localises to the secreted. It is found in the host cell. In terms of biological role, effector proteins function to alter host cell physiology and promote bacterial survival in host tissues. This protein is a kinase that is involved in down-regulation of the host innate response induced by invasive bacteria. In Shigella flexneri serotype X (strain 2002017), this protein is Protein kinase OspG (ospG).